The sequence spans 895 residues: DNA mismatch repair protein MutS (895 aa).

ATP is bound at residue 632–639; that stretch reads GPNMAGKS. The tract at residues 824–849 is disordered; the sequence is VTQDKKQVKKQTKNNHSARSGSRQQQ. Positions 837 to 849 are enriched in polar residues; sequence NNHSARSGSRQQQ.

The protein belongs to the DNA mismatch repair MutS family.

Functionally, this protein is involved in the repair of mismatches in DNA. It is possible that it carries out the mismatch recognition step. This protein has a weak ATPase activity. The polypeptide is DNA mismatch repair protein MutS (Desulforapulum autotrophicum (strain ATCC 43914 / DSM 3382 / VKM B-1955 / HRM2) (Desulfobacterium autotrophicum)).